Reading from the N-terminus, the 587-residue chain is Heavy metal-associated isoprenylated plant protein 33 (587 aa).

In terms of domain architecture, HMA spans Ile9–Glu72. Positions 20 and 23 each coordinate a metal cation. Disordered regions lie at residues Gln98 to Pro146, Leu176 to Met261, Ala287 to Asn449, Pro462 to Gln504, and Tyr532 to Met587. Gly residues-rich tracts occupy residues Lys104–Pro113 and Lys121–Pro140. Low complexity predominate over residues Pro194 to Lys208. Residues Pro215–Asp248 are compositionally biased toward acidic residues. Composition is skewed to gly residues over residues Asn290–Lys300, Met312–Pro419, and Gly428–Gly445. A compositionally biased stretch (low complexity) spans Ser471 to Val483. Pro residues-rich tracts occupy residues Arg534 to Gln547 and Tyr554 to Pro565. A compositionally biased stretch (polar residues) spans Asp578–Met587. A Cysteine methyl ester modification is found at Cys584. Residue Cys584 is the site of S-farnesyl cysteine attachment. Residues Asn585–Met587 constitute a propeptide, removed in mature form.

Belongs to the HIPP family.

Its function is as follows. Heavy-metal-binding protein. This chain is Heavy metal-associated isoprenylated plant protein 33, found in Arabidopsis thaliana (Mouse-ear cress).